Reading from the N-terminus, the 333-residue chain is Glycerol-3-phosphate dehydrogenase [NAD(P)+] 2 (333 aa).

4 residues coordinate NADPH: S12, W13, R32, and K106. K106 and G134 together coordinate sn-glycerol 3-phosphate. A138 serves as a coordination point for NADPH. Sn-glycerol 3-phosphate contacts are provided by K189, D242, S252, R253, and N254. The active-site Proton acceptor is the K189. R253 provides a ligand contact to NADPH. NADPH-binding residues include V277 and E279.

It belongs to the NAD-dependent glycerol-3-phosphate dehydrogenase family.

The protein resides in the cytoplasm. It carries out the reaction sn-glycerol 3-phosphate + NAD(+) = dihydroxyacetone phosphate + NADH + H(+). The catalysed reaction is sn-glycerol 3-phosphate + NADP(+) = dihydroxyacetone phosphate + NADPH + H(+). It functions in the pathway membrane lipid metabolism; glycerophospholipid metabolism. Functionally, catalyzes the reduction of the glycolytic intermediate dihydroxyacetone phosphate (DHAP) to sn-glycerol 3-phosphate (G3P), the key precursor for phospholipid synthesis. The chain is Glycerol-3-phosphate dehydrogenase [NAD(P)+] 2 from Sphingopyxis alaskensis (strain DSM 13593 / LMG 18877 / RB2256) (Sphingomonas alaskensis).